The chain runs to 298 residues: Homoserine kinase (298 aa).

83–93 (PVSRGLGSSST) serves as a coordination point for ATP.

This sequence belongs to the GHMP kinase family. Homoserine kinase subfamily.

The protein resides in the cytoplasm. The enzyme catalyses L-homoserine + ATP = O-phospho-L-homoserine + ADP + H(+). The protein operates within amino-acid biosynthesis; L-threonine biosynthesis; L-threonine from L-aspartate: step 4/5. Its function is as follows. Catalyzes the ATP-dependent phosphorylation of L-homoserine to L-homoserine phosphate. The protein is Homoserine kinase of Clostridium beijerinckii (strain ATCC 51743 / NCIMB 8052) (Clostridium acetobutylicum).